The sequence spans 36 residues: Peroxiredoxin-4 (36 aa).

It belongs to the peroxiredoxin family. AhpC/Prx1 subfamily. In terms of assembly, homodimer; disulfide-linked, upon oxidation. As to expression, venom gland.

It localises to the secreted. The catalysed reaction is a hydroperoxide + [thioredoxin]-dithiol = an alcohol + [thioredoxin]-disulfide + H2O. Its function is as follows. Venom peroxiredoxin enzyme that may play a role as part of a redox pathway leading to the structural/functional diversification of toxins through a disulfide bond engineering mechanism. This Crotalus atrox (Western diamondback rattlesnake) protein is Peroxiredoxin-4.